The primary structure comprises 100 residues: Urease subunit gamma (100 aa).

It belongs to the urease gamma subunit family. Heterotrimer of UreA (gamma), UreB (beta) and UreC (alpha) subunits. Three heterotrimers associate to form the active enzyme.

It localises to the cytoplasm. The enzyme catalyses urea + 2 H2O + H(+) = hydrogencarbonate + 2 NH4(+). The protein operates within nitrogen metabolism; urea degradation; CO(2) and NH(3) from urea (urease route): step 1/1. The polypeptide is Urease subunit gamma (Jannaschia sp. (strain CCS1)).